Here is a 487-residue protein sequence, read N- to C-terminus: MPVPPPPAPPPPPTFALANTEKPSLNKTEQAGRNALLSDISKGKKLKKTVTNDRSAPILDKPKGAGGGYGGGSGGGGGGGSSGGGGNFGGGGPPGLGGLFQAGMPKLRSTANRDNDSGGSRPPILPPGGRATSAKPFSSPSGPGRFPAPSPGHRSGPPEPPRNRMPPPRPDVGSKPDSLPPPVPNTPRPIPSSLHNRGSPAGLGAPRPPFPGNRGAAFGAGSVRQNLSSSSSPFPRPPLPPTPSRALDDKPPPPPPPVGNRPSMHREAVPPPPSQNSKPPVPSTPRPGAGSQAPPPPPPSRPGPPPLPPTSSDEIPRLPQRNLSLTSPTPPLPSPGRSGPLPPPPTERPPPPVRDPPGRSGPLPPPPPINRNGSTARALPATPQLPSRSGMDSPRSGPRPPLPPDRPGAGAPPPPPPSTSVRNGFQDSSCEDEWESRFYFHPISDLPPPEPYVPTTKTYPSKVARSESRSGSNRRERGAPPLPPIPR.

Residues 1-14 are compositionally biased toward pro residues; that stretch reads MPVPPPPAPPPPPT. The tract at residues 1 to 487 is disordered; that stretch reads MPVPPPPAPP…GAPPLPPIPR (487 aa). The segment covering 21–31 has biased composition (polar residues); that stretch reads EKPSLNKTEQA. Residues 32–49 enclose the WH2 domain; that stretch reads GRNALLSDISKGKKLKKT. The residue at position 33 (Arg-33) is an Asymmetric dimethylarginine. Residues 45–48 form a binds actin region; sequence KLKK. Gly residues predominate over residues 64-100; that stretch reads GAGGGYGGGSGGGGGGGSSGGGGNFGGGGPPGLGGLF. Omega-N-methylarginine is present on residues Arg-121 and Arg-130. Low complexity predominate over residues 136–147; it reads PFSSPSGPGRFP. The residue at position 138 (Ser-138) is a Phosphoserine. Composition is skewed to pro residues over residues 157-170 and 178-190; these read PPEP…PPRP and SLPP…PRPI. Ser-222 is modified (phosphoserine). 3 stretches are compositionally biased toward pro residues: residues 234–243, 269–285, and 293–309; these read FPRPPLPPTP, VPPP…PSTP, and APPP…PLPP. Residue Ser-324 is modified to Phosphoserine. Positions 328–355 are enriched in pro residues; that stretch reads PTPPLPSPGRSGPLPPPPTERPPPPVRD. Thr-329 carries the phosphothreonine modification. Position 334 is a phosphoserine (Ser-334). XRSGPXPPXP motif repeat units follow at residues 336–345, 358–367, and 394–403; these read GRSGPLPPPP and PRSGPRPPLP. A compositionally biased stretch (pro residues) spans 397–418; that stretch reads GPRPPLPPDRPGAGAPPPPPPS. Over residues 419-428 the composition is skewed to polar residues; that stretch reads TSVRNGFQDS. The segment covering 464–478 has biased composition (basic and acidic residues); it reads ARSESRSGSNRRERG.

This sequence belongs to the verprolin family. As to quaternary structure, binds to WAS within the N-terminal region, at a site distinct from the CDC42-binding site. Binds profilin and actin. Interacts with DBNL. Binds to WASL. Interacts with DBNL. Interacts with FNBP1L (via the SH3 domain). Isoforms were differentially expressed. One isoform was ubiquitously expressed, another was muscle-specific and another was expressed in the liver, heart and testis.

The protein resides in the cytoplasmic vesicle. It is found in the cytoplasm. The protein localises to the cytoskeleton. It localises to the cell projection. Its subcellular location is the ruffle. In terms of biological role, plays a role in the reorganization of the actin cytoskeleton. Contributes with NCK1 and GRB2 in the recruitment and activation of WASL. Plays a role in the formation of cell ruffles. May participate in regulating the subcellular localization of WASL, resulting in the disassembly of stress fibers in favor of filopodia formation. This Rattus norvegicus (Rat) protein is WAS/WASL-interacting protein family member 1 (Wipf1).